Consider the following 218-residue polypeptide: Large ribosomal subunit protein uL3 (218 aa).

This sequence belongs to the universal ribosomal protein uL3 family. Part of the 50S ribosomal subunit. Forms a cluster with proteins L14 and L19.

One of the primary rRNA binding proteins, it binds directly near the 3'-end of the 23S rRNA, where it nucleates assembly of the 50S subunit. The protein is Large ribosomal subunit protein uL3 of Corynebacterium glutamicum (strain R).